The chain runs to 529 residues: Probable pectinesterase/pectinesterase inhibitor 35 (529 aa).

The first 34 residues, 1-34 (MATTSFSLPNHKFGIKLMLFLVLNLLSLQTSVFA), serve as a signal peptide directing secretion. The segment at 36–180 (SSNSKFTKIS…TGLLTNSLDM (145 aa)) is pectinesterase inhibitor 35. Residues 42–64 (TKISRHPNSDSSSRTKPSTSSNK) form a disordered region. Residues 50–64 (SDSSSRTKPSTSSNK) are compositionally biased toward low complexity. N-linked (GlcNAc...) asparagine glycosylation is found at Asn86, Asn169, and Asn193. Residues 228–514 (HAVVAADGSG…FTVSGFIDGN (287 aa)) form a pectinesterase 35 region. 2 residues coordinate substrate: Thr302 and Gln332. The Proton donor; for pectinesterase activity role is filled by Asp355. The active-site Nucleophile; for pectinesterase activity is Asp376. Substrate is bound by residues Arg434 and Trp436.

In the N-terminal section; belongs to the PMEI family. This sequence in the C-terminal section; belongs to the pectinesterase family. As to expression, expressed in siliques.

Its subcellular location is the secreted. The protein localises to the cell wall. It carries out the reaction [(1-&gt;4)-alpha-D-galacturonosyl methyl ester](n) + n H2O = [(1-&gt;4)-alpha-D-galacturonosyl](n) + n methanol + n H(+). The protein operates within glycan metabolism; pectin degradation; 2-dehydro-3-deoxy-D-gluconate from pectin: step 1/5. Its function is as follows. Acts in the modification of cell walls via demethylesterification of cell wall pectin. This Arabidopsis thaliana (Mouse-ear cress) protein is Probable pectinesterase/pectinesterase inhibitor 35 (PME35).